The sequence spans 443 residues: Delta(6)-fatty-acid desaturase fat-3 (443 aa).

Residues 1–71 form the Cytochrome b5 heme-binding domain; sequence MVVDKNASGL…DLLKKHGEHD (71 aa). 3 helical membrane passes run 136-156, 296-316, and 318-338; these read IMAFAFYLQYLGWYITSACLL, TIVGHWAWVFYQLFLLPTWPL, and VAYFIISQMGGGLLIAHVVTF.

This sequence belongs to the fatty acid desaturase type 1 family.

The protein localises to the membrane. It catalyses the reaction (9Z,12Z)-octadecadienoyl-CoA + 2 Fe(II)-[cytochrome b5] + O2 + 2 H(+) = (6Z,9Z,12Z)-octadecatrienoyl-CoA + 2 Fe(III)-[cytochrome b5] + 2 H2O. The catalysed reaction is (9Z,12Z,15Z)-octadecatrienoyl-CoA + 2 Fe(II)-[cytochrome b5] + O2 + 2 H(+) = (6Z,9Z,12Z,15Z)-octadecatetraenoyl-CoA + 2 Fe(III)-[cytochrome b5] + 2 H2O. It participates in lipid metabolism; polyunsaturated fatty acid biosynthesis. Its function is as follows. Can function as a Delta(6) fatty acid desaturase. Introduces a double bond in the fatty acid chain 6 carbons away from carboxy terminal to biosynthesize polyunsaturated fatty acids (PUFAs) endogenously (PUFAs are essential for membrane structure and many cellular and physiological processes). Acts on a variety of substrates such as linoleoyl-CoA ((9Z,12Z)-octadecadienoyl-CoA, C18:2n-6) and alpha-linolenoyl-CoA ((9Z,12Z,15Z)-octadecatrienoyl-CoA, C18:3n-3) to produce gamma-linolenoyl-CoA ((6Z,9Z,12Z)-octadecatrienoyl-CoA, C18:3n-6) and (6Z,9Z,12Z,15Z)-octadecatetraenoyl-CoA (18:4n-3) respectively. Unlike plants, Caenorhabditis elegans desaturases seem to use fatty acyl-CoAs as substrates. Plays a role in synaptic vesicle recycling by regulating synaptojanin unc-26 localization at synapses. The protein is Delta(6)-fatty-acid desaturase fat-3 (fat-3) of Caenorhabditis elegans.